The chain runs to 130 residues: Small ribosomal subunit protein uS9 (130 aa).

This sequence belongs to the universal ribosomal protein uS9 family.

The sequence is that of Small ribosomal subunit protein uS9 from Paracidovorax citrulli (strain AAC00-1) (Acidovorax citrulli).